Here is a 196-residue protein sequence, read N- to C-terminus: DnaA initiator-associating protein DiaA (196 aa).

One can recognise an SIS domain in the interval 34 to 196; sequence LVQSLLNGNK…DNTLFPHQDV (163 aa).

The protein belongs to the SIS family. DiaA subfamily. As to quaternary structure, homotetramer; dimer of dimers.

Functionally, required for the timely initiation of chromosomal replication via direct interactions with the DnaA initiator protein. The polypeptide is DnaA initiator-associating protein DiaA (Escherichia coli O6:K15:H31 (strain 536 / UPEC)).